We begin with the raw amino-acid sequence, 473 residues long: Phosphatidylserine synthase 1 (473 aa).

Ala-2 carries the post-translational modification N-acetylalanine. Residues 2–35 (ASCVGSRTLSKDDVNYRMHFRMINEQQVEDITID) lie on the Cytoplasmic side of the membrane. A helical membrane pass occupies residues 36–56 (FFYRPHTITLLSFTIISLMYF). At 57-72 (AFTRDDSVPEDNIWRG) the chain is on the lumenal side. Residues 73 to 93 (ILSVIFFFLIISVLAFPNGPF) traverse the membrane as a helical segment. The Cytoplasmic segment spans residues 94 to 102 (TRPHPALWR). Residues 103–123 (MVFGLSVLYFLFLVFLLFLNF) form a helical membrane-spanning segment. Residues 124–186 (EQVKSLMYWL…AMKALLIRSY (63 aa)) lie on the Lumenal side of the membrane. The helical transmembrane segment at 187 to 207 (GLCWTISITWELTELFFMHLL) threads the bilayer. Residues 208–216 (PNFAECWWD) lie on the Cytoplasmic side of the membrane. The chain crosses the membrane as a helical span at residues 217-237 (QVILDILLCNGGGIWLGMVVC). The Lumenal portion of the chain corresponds to 238 to 286 (RFLEMRTYHWASFKDIHTTTGKIKRAVLQFTPASWTYVRWFDPKSSFQR). A helical membrane pass occupies residues 287–307 (VAGIYLFMIIWQLTELNTFFL). Over 308–319 (KHIFVFQASHPL) the chain is Cytoplasmic. Residues 320–342 (SWGRILFIGCITAPTVRQYYAYL) traverse the membrane as a helical segment. At 343 to 355 (TDTQCKRVGTQCW) the chain is on the lumenal side. Residues 356 to 376 (VFGVIGFLEAIVCIKFGQDLF) traverse the membrane as a helical segment. Residues 377-383 (SKTQILY) lie on the Cytoplasmic side of the membrane. The chain crosses the membrane as a helical span at residues 384-404 (VMLWLLCVAFTTFLCLYGMVW). Over 405–473 (YAEHYGHREK…SKVTNGVGKK (69 aa)) the chain is Lumenal. 4 positions are modified to phosphoserine: Ser-417, Ser-425, Ser-442, and Ser-454. Positions 428-473 (ISWHHGKGSKGSEDSPPKHSSNHESHSSRRRNRHSKSKVTNGVGKK) are disordered. Residues 437–454 (KGSEDSPPKHSSNHESHS) are compositionally biased toward basic and acidic residues. Residues 455–464 (SRRRNRHSKS) show a composition bias toward basic residues.

Belongs to the phosphatidyl serine synthase family. In terms of tissue distribution, expressed in kidney, testis, lung, skeletal muscle, liver brain, heart and spleen with highest expression in testis, liver, heart and brain.

Its subcellular location is the endoplasmic reticulum membrane. The catalysed reaction is a 1,2-diacyl-sn-glycero-3-phosphoethanolamine + L-serine = a 1,2-diacyl-sn-glycero-3-phospho-L-serine + ethanolamine. It carries out the reaction a 1,2-diacyl-sn-glycero-3-phosphocholine + L-serine = a 1,2-diacyl-sn-glycero-3-phospho-L-serine + choline. Its pathway is phospholipid metabolism; phosphatidylserine biosynthesis. Potently inhibited by choline in the mitochondria-associated membrane (MAM). Very little inhibition by choline in the endoplasmic reticulum (ER) per se. In terms of biological role, catalyzes a base-exchange reaction in which the polar head group of phosphatidylethanolamine (PE) or phosphatidylcholine (PC) is replaced by L-serine. Catalyzes mainly the conversion of phosphatidylcholine. Also converts, in vitro and to a lesser extent, phosphatidylethanolamine. The polypeptide is Phosphatidylserine synthase 1 (Ptdss1) (Mus musculus (Mouse)).